The primary structure comprises 166 residues: MPEFLDIRPLTRLAFAPFGEVIEADPASMRLINGGTTERFHALAAAEAAGEGARVIINLFRGQPRSFPYAVDMMERHPFGSQSFSPVSGRPFLVVVSEDEGGRPGRPQVFLARGDQGVNYRRNVWHHPLMALGQASDFLVVDRDGPGNNLEEFFFETPFVIKEPAS.

It belongs to the ureidoglycolate lyase family. Homodimer. Ni(2+) serves as cofactor.

It carries out the reaction (S)-ureidoglycolate = urea + glyoxylate. Its pathway is nitrogen metabolism; (S)-allantoin degradation. Catalyzes the catabolism of the allantoin degradation intermediate (S)-ureidoglycolate, generating urea and glyoxylate. Involved in the utilization of allantoin as nitrogen source. In Rhizobium etli (strain CIAT 652), this protein is Ureidoglycolate lyase.